The primary structure comprises 230 residues: RING finger protein 141 (230 aa).

Residue Gly-2 is the site of N-myristoyl glycine attachment. The RING-type zinc finger occupies 155–192 (CCICMDGRADLILPCAHSFCQKCIDKWSDRHRNCPICR).

It localises to the membrane. May be involved in spermatogenesis. The chain is RING finger protein 141 (RNF141) from Bos taurus (Bovine).